The chain runs to 369 residues: UDP-N-acetylglucosamine--N-acetylmuramyl-(pentapeptide) pyrophosphoryl-undecaprenol N-acetylglucosamine transferase (369 aa).

UDP-N-acetyl-alpha-D-glucosamine-binding positions include threonine 10–glycine 12, asparagine 124, arginine 166, serine 196, and glutamine 300.

It belongs to the glycosyltransferase 28 family. MurG subfamily.

Its subcellular location is the cell membrane. The catalysed reaction is di-trans,octa-cis-undecaprenyl diphospho-N-acetyl-alpha-D-muramoyl-L-alanyl-D-glutamyl-meso-2,6-diaminopimeloyl-D-alanyl-D-alanine + UDP-N-acetyl-alpha-D-glucosamine = di-trans,octa-cis-undecaprenyl diphospho-[N-acetyl-alpha-D-glucosaminyl-(1-&gt;4)]-N-acetyl-alpha-D-muramoyl-L-alanyl-D-glutamyl-meso-2,6-diaminopimeloyl-D-alanyl-D-alanine + UDP + H(+). Its pathway is cell wall biogenesis; peptidoglycan biosynthesis. Cell wall formation. Catalyzes the transfer of a GlcNAc subunit on undecaprenyl-pyrophosphoryl-MurNAc-pentapeptide (lipid intermediate I) to form undecaprenyl-pyrophosphoryl-MurNAc-(pentapeptide)GlcNAc (lipid intermediate II). This Desulfitobacterium hafniense (strain Y51) protein is UDP-N-acetylglucosamine--N-acetylmuramyl-(pentapeptide) pyrophosphoryl-undecaprenol N-acetylglucosamine transferase.